Consider the following 464-residue polypeptide: UDP-glycosyltransferase 83A1 (464 aa).

UDP-alpha-D-glucose is bound by residues serine 295, 341–343, 358–366, and 380–383; these read APQ, HCGWNSTLE, and FADQ.

Belongs to the UDP-glycosyltransferase family.

This is UDP-glycosyltransferase 83A1 (UGT83A1) from Arabidopsis thaliana (Mouse-ear cress).